A 328-amino-acid chain; its full sequence is scyllo-inositol 2-dehydrogenase (NADP(+)) IolU (328 aa).

The protein belongs to the Gfo/Idh/MocA family.

It carries out the reaction scyllo-inositol + NADP(+) = scyllo-inosose + NADPH + H(+). In terms of biological role, catalyzes the NADPH-dependent reduction of scyllo-inosose (SIS) to scyllo-inositol (SI) in vitro, but is unable to dehydrogenate scyllo-inositol and myo-inositol. Is less efficient than the functional paralog IolW. Under physiological conditions, may primarily function as an NADPH-dependent oxidoreductase that reduces carbonyl group(s) in its substrates. Cannot use NADH instead of NADPH. The protein is scyllo-inositol 2-dehydrogenase (NADP(+)) IolU of Bacillus subtilis (strain 168).